A 468-amino-acid chain; its full sequence is Serine--tRNA ligase (468 aa).

An L-serine-binding site is contributed by 272 to 274 (TAE). Residue 303 to 305 (RAE) coordinates ATP. Residue Glu326 coordinates L-serine. Residue 390–393 (EISS) coordinates ATP. Ser426 provides a ligand contact to L-serine.

The protein belongs to the class-II aminoacyl-tRNA synthetase family. Type-1 seryl-tRNA synthetase subfamily. In terms of assembly, homodimer. The tRNA molecule binds across the dimer.

Its subcellular location is the cytoplasm. The catalysed reaction is tRNA(Ser) + L-serine + ATP = L-seryl-tRNA(Ser) + AMP + diphosphate + H(+). It carries out the reaction tRNA(Sec) + L-serine + ATP = L-seryl-tRNA(Sec) + AMP + diphosphate + H(+). The protein operates within aminoacyl-tRNA biosynthesis; selenocysteinyl-tRNA(Sec) biosynthesis; L-seryl-tRNA(Sec) from L-serine and tRNA(Sec): step 1/1. Its function is as follows. Catalyzes the attachment of serine to tRNA(Ser). Is also able to aminoacylate tRNA(Sec) with serine, to form the misacylated tRNA L-seryl-tRNA(Sec), which will be further converted into selenocysteinyl-tRNA(Sec). The chain is Serine--tRNA ligase from Xanthobacter autotrophicus (strain ATCC BAA-1158 / Py2).